The sequence spans 158 residues: Ribosome maturation factor RimP (158 aa).

The protein belongs to the RimP family.

Its subcellular location is the cytoplasm. Functionally, required for maturation of 30S ribosomal subunits. This is Ribosome maturation factor RimP from Lactiplantibacillus plantarum (strain ATCC BAA-793 / NCIMB 8826 / WCFS1) (Lactobacillus plantarum).